The following is a 167-amino-acid chain: Ion-translocating oxidoreductase complex subunit B (167 aa).

The tract at residues M1–A22 is hydrophobic. Positions Q28–I87 constitute a 4Fe-4S domain. Residues C45, C48, C53, C70, C113, C116, C119, C123, C143, C146, C149, and C153 each coordinate [4Fe-4S] cluster. 4Fe-4S ferredoxin-type domains follow at residues N104–N133 and F134–E163.

Belongs to the 4Fe4S bacterial-type ferredoxin family. RnfB subfamily. In terms of assembly, the complex is composed of six subunits: RnfA, RnfB, RnfC, RnfD, RnfE and RnfG. Requires [4Fe-4S] cluster as cofactor.

Its subcellular location is the cell inner membrane. Its function is as follows. Part of a membrane-bound complex that couples electron transfer with translocation of ions across the membrane. The sequence is that of Ion-translocating oxidoreductase complex subunit B from Buchnera aphidicola subsp. Acyrthosiphon pisum (strain 5A).